An 867-amino-acid polypeptide reads, in one-letter code: GATOR2 complex protein Mio (867 aa).

WD repeat units lie at residues 51–86, 100–144, 149–188, 190–228, and 231–272; these read ANES…GICN, RQQR…PKET, GVGE…ATCQ, IQTK…SPLR, and QSSK…TDNS. A compositionally biased stretch (low complexity) spans 350 to 376; the sequence is PASPTSTAATPTQQQPTSSCSTNSGSS. Residues 350–378 form a disordered region; sequence PASPTSTAATPTQQQPTSSCSTNSGSSLD. The C4-type zinc finger occupies 739 to 777; sequence LSCNFCGKSVSNALLDEPRPRSTTTSTNRLSSCPSCRKP. Zn(2+) is bound by residues Cys741, Cys744, Cys771, Cys774, Cys784, Cys821, Cys824, His826, His829, His832, Cys843, Cys848, and Cys852. Residues 778–857 form an RING-type; atypical zinc finger; it reads LPRCSLCLMH…CNCRCFDMDG (80 aa).

Belongs to the WD repeat mio family. Component of the GATOR complex consisting of mio, Nup44A/Seh1, Im11, Nplr3, Nplr2, Wdr24, Wdr59 and Sec13. Within the GATOR complex, probable component of the GATOR2 subcomplex which is likely composed of mio, Nup44A/Seh1, Wdr24, Wdr59 and Sec13. Interacts with Wdr24. Interacts with nucleoporin Nup44A/Seh1. The GATOR2 complex associates with unmet in the absence of S-adenosyl-L-methionine; the mio-Wdr24-Nup44A subcomplex is essential and sufficient for this interaction while Wdr59 and Sec13 are dispensable. This association acts as a nutrient sensor to inhibit mTORC1 signaling in the absence of methionine. As to expression, present in the oocyte.

Its subcellular location is the nucleus. It is found in the lysosome. In terms of biological role, an essential component of the GATOR subcomplex GATOR2 which functions as an activator of the amino acid-sensing branch of the mTORC1 signaling pathway. The two GATOR subcomplexes, GATOR1 and GATOR2, regulate the mTORC1 pathway in order to mediate metabolic homeostasis, female gametogenesis and the response to amino acid limitation and complete starvation. GATOR2 activates the mTORC1 signaling pathway through the inhibition of the GATOR1 subcomplex, controlling the switch to cell proliferation and growth under nutrient replete conditions and during female oocyte development. This component is required for activating mTORC1 specifically in germline cells to promote cell growth and maintain the oocyte fate. GATOR1 and GATOR2 act at different stages of oogenesis to regulate mTORC1 in order to control meiotic entry and promote oocyte growth and development. After exactly four mitotic cyst divisions, the GATOR1 complex members (Iml1, Nprl2 and Nprl3) down-regulate mTORC1 to slow cellular metabolism and promote the mitotic/meiotic transition. At later stages of oogenesis, the mio and Nup44A components of the GATOR2 complex inhibit GATOR1 and thus activate mTORC1 to promote meiotic progression, and drive oocyte growth and development. In addition to its role in the regulation of the mTORC1 complex, functions independently of mTORC1 to prevent the inappropriate accumulation of autolysosomes in germline tissues. In Drosophila melanogaster (Fruit fly), this protein is GATOR2 complex protein Mio.